Here is a 131-residue protein sequence, read N- to C-terminus: Superoxide dismutase [Ni] (131 aa).

Residues 1–14 constitute a propeptide that is removed on maturation; it reads MLSRLFAPKVKVSA. Residues His-15, Cys-16, and Cys-20 each contribute to the Ni(2+) site.

This sequence belongs to the nickel superoxide dismutase family. As to quaternary structure, homohexamer. The hexameric protein has roughly the shape of a hollow sphere with an outer diameter of 72 Angstroms and a large inner cavity. Ni(2+) serves as cofactor.

The protein localises to the cytoplasm. The catalysed reaction is 2 superoxide + 2 H(+) = H2O2 + O2. This chain is Superoxide dismutase [Ni] (sodN), found in Streptomyces seoulensis.